We begin with the raw amino-acid sequence, 22 residues long: Polydim-I (22 aa).

Expressed by the venom gland.

The protein localises to the secreted. Functionally, antibacterial peptide. Acts on the Mycobacterium abscessus subsp. massiliense cell wall. Reduces 40-50% of the bacterial load in macrophages infected with different M.abscessus strains. Is not cytotoxic towards mammalian cells, and shows no hemolytic activity against human erythrocytes. In vivo, reduces the bacterial load in the lungs, spleen, and liver of highly susceptible mice intravenously infected with M.abscessus. This chain is Polydim-I, found in Polybia dimorpha (Neotropical wasp).